The following is a 397-amino-acid chain: L-rhamnonate dehydratase (397 aa).

Substrate-binding residues include histidine 25 and arginine 51. Mg(2+)-binding residues include aspartate 217, glutamate 243, and glutamate 271. The Proton acceptor role is filled by histidine 321. Glutamate 341 is a binding site for substrate.

Belongs to the mandelate racemase/muconate lactonizing enzyme family. RhamD subfamily. Homooctamer; tetramer of dimers. The cofactor is Mg(2+).

The enzyme catalyses L-rhamnonate = 2-dehydro-3-deoxy-L-rhamnonate + H2O. The protein operates within carbohydrate degradation; L-rhamnose degradation. Catalyzes the dehydration of L-rhamnonate to 2-keto-3-deoxy-L-rhamnonate (KDR). Also shows activity with L-lyxonate and L-mannonate, with much lower catalytic efficiency. Catalyzes the third step in an alternative pathway for rhamnose utilization that does not involve phosphorylated intermediates. This chain is L-rhamnonate dehydratase, found in Sphingomonas sp. (strain SKA58).